The sequence spans 382 residues: Protein RecA (382 aa).

Residue 79 to 86 (GPESSGKT) coordinates ATP.

It belongs to the RecA family.

It localises to the cytoplasm. Functionally, can catalyze the hydrolysis of ATP in the presence of single-stranded DNA, the ATP-dependent uptake of single-stranded DNA by duplex DNA, and the ATP-dependent hybridization of homologous single-stranded DNAs. It interacts with LexA causing its activation and leading to its autocatalytic cleavage. This chain is Protein RecA, found in Streptococcus sanguinis (strain SK36).